The following is a 258-amino-acid chain: Short-chain dehydrogenase/reductase aba4 (258 aa).

NADP(+) contacts are provided by I20, D66, and K130. Catalysis depends on proton donor residues S146 and Y160. NADP(+) contacts are provided by Y160, K164, I193, and T195. The active-site Lowers pKa of active site Tyr is the K164.

This sequence belongs to the short-chain dehydrogenases/reductases (SDR) family.

Its pathway is hormone biosynthesis. Short-chain dehydrogenase/reductase; part of the gene cluster that mediates the biosynthesis of abscisic acid (ABA), a phytohormone that acts antagonistically toward salicylic acid (SA), jasmonic acid (JA) and ethylene (ETH) signaling, to impede plant defense responses. The first step of the pathway catalyzes the reaction from farnesyl diphosphate to alpha-ionylideneethane performed by the alpha-ionylideneethane synthase aba3 via a three-step reaction mechanism involving 2 neutral intermediates, beta-farnesene and allofarnesene. The cytochrome P450 monooxygenase aba1 might then be involved in the conversion of alpha-ionylideneethane to alpha-ionylideneacetic acid. Alpha-ionylideneacetic acid is further converted to abscisic acid in 2 steps involving the cytochrome P450 monooxygenase aba2 and the short-chain dehydrogenase/reductase aba4, via the intermediates 1'-deoxy-ABA or 1',4'-trans-diol-ABA, depending on the order of action of these 2 enzymes. Aba2 is responsible for the hydroxylation of carbon atom C-1' and aba4 might be involved in the oxidation of the C-4' carbon atom. In Botryotinia fuckeliana (Noble rot fungus), this protein is Short-chain dehydrogenase/reductase aba4.